We begin with the raw amino-acid sequence, 726 residues long: WD repeat and coiled-coil-containing protein (726 aa).

WD repeat units follow at residues G55–N98 and K154–C194. A disordered region spans residues R502 to S574. A compositionally biased stretch (polar residues) spans G506 to N515. Positions F517–P533 are enriched in basic and acidic residues. The segment covering S550–S574 has biased composition (polar residues). A coiled-coil region spans residues S581 to N609.

This Xenopus laevis (African clawed frog) protein is WD repeat and coiled-coil-containing protein (wdcp).